The chain runs to 496 residues: Probable cytosol aminopeptidase (496 aa).

Mn(2+) contacts are provided by Lys251 and Asp256. The active site involves Lys263. The Mn(2+) site is built by Asp274, Asp333, and Glu335. Arg337 is an active-site residue.

The protein belongs to the peptidase M17 family. Requires Mn(2+) as cofactor.

The protein resides in the cytoplasm. The enzyme catalyses Release of an N-terminal amino acid, Xaa-|-Yaa-, in which Xaa is preferably Leu, but may be other amino acids including Pro although not Arg or Lys, and Yaa may be Pro. Amino acid amides and methyl esters are also readily hydrolyzed, but rates on arylamides are exceedingly low.. It carries out the reaction Release of an N-terminal amino acid, preferentially leucine, but not glutamic or aspartic acids.. Its function is as follows. Presumably involved in the processing and regular turnover of intracellular proteins. Catalyzes the removal of unsubstituted N-terminal amino acids from various peptides. This Acidovorax sp. (strain JS42) protein is Probable cytosol aminopeptidase.